A 460-amino-acid polypeptide reads, in one-letter code: Hydroxyproline dehydrogenase (460 aa).

Lys310 carries the N6-acetyllysine modification.

Belongs to the proline oxidase family. FAD serves as cofactor.

It carries out the reaction trans-4-hydroxy-L-proline + a quinone = (3R,5S)-1-pyrroline-3-hydroxy-5-carboxylate + a quinol + H(+). It catalyses the reaction L-proline + a quinone = (S)-1-pyrroline-5-carboxylate + a quinol + H(+). Hydroproxyproline dehydrogenase activity is inhibited by THFA,(1R,3R)3-OH-cyclopentane-COOH and 5-OH-1H-pyrazole-3-COOH. In terms of biological role, dehydrogenase that converts trans-4-L-hydroxyproline to delta-1-pyrroline-3-hydroxy-5-carboxylate (Hyp) using ubiquinone-10 as the terminal electron acceptor. Can also use proline as a substrate but with a very much lower efficiency. Does not react with other diastereomers of Hyp: trans-4-D-hydroxyproline and cis-4-L-hydroxyproline. Ubiquininone analogs such as menadione, duroquinone and ubiquinone-1 react more efficiently than oxygen as the terminal electron acceptor during catalysis. The sequence is that of Hydroxyproline dehydrogenase from Homo sapiens (Human).